Here is a 765-residue protein sequence, read N- to C-terminus: Probable serine/threonine-protein kinase DDB_G0271402 (765 aa).

The Protein kinase domain occupies 35–328 (LEFGQEIGKG…KEITERLKSL (294 aa)). ATP is bound by residues 41 to 49 (IGKGAYGKI) and Lys-62. The active-site Proton acceptor is Asp-192. 7 disordered regions span residues 371–393 (IVHNNHNHSSSSNNSSGYNNNSN), 443–477 (SMGDESDLDSDDEDDSYTSSASSSRCNSRNGKIIN), 491–527 (SSDLESSPNGNNINNNNNNNNNNNNNNNNNNNNNNNS), 545–620 (PIQI…QQYQ), 654–684 (PLNISPTQNNNNNNNNSNNNNGNVNHNHHHL), 699–738 (IISSSSTTSSSTSTPSLVSLTSSRDHHHHHISVTSSPTNI), and 746–765 (ASNSSVFTPLGSGLTRTVQS). The segment covering 446-458 (DESDLDSDDEDDS) has biased composition (acidic residues). Composition is skewed to low complexity over residues 459–470 (YTSSASSSRCNS), 499–527 (NGNNINNNNNNNNNNNNNNNNNNNNNNNS), 562–605 (PPTS…PKSN), 662–678 (NNNNNNNNSNNNNGNVN), and 699–720 (IISSSSTTSSSTSTPSLVSLTS).

This sequence belongs to the protein kinase superfamily. TKL Ser/Thr protein kinase family.

The enzyme catalyses L-seryl-[protein] + ATP = O-phospho-L-seryl-[protein] + ADP + H(+). It carries out the reaction L-threonyl-[protein] + ATP = O-phospho-L-threonyl-[protein] + ADP + H(+). The sequence is that of Probable serine/threonine-protein kinase DDB_G0271402 from Dictyostelium discoideum (Social amoeba).